The chain runs to 620 residues: Glutathione-regulated potassium-efflux system protein KefC (620 aa).

12 helical membrane-spanning segments follow: residues 4-24 (HTLI…PIAV), 26-46 (LGLG…PWGL), 54-74 (SILH…GLEL), 90-110 (GALQ…LLGL), 114-134 (VAEL…MQAM), 149-169 (FAVL…IPLL), 178-198 (MGAF…VVLL), 218-238 (VFSA…EEVG), 270-290 (GLLL…GTLL), 294-314 (LRIV…LWLI), 327-347 (WFAV…GTAQ), and 359-379 (SLTL…VILN). Positions 399-518 (QPRVIIAGFG…AGVEKPERET (120 aa)) constitute an RCK N-terminal domain. The disordered stretch occupies residues 597-620 (GWQGTEEGKHTGNMADEPETKPSS).

Belongs to the monovalent cation:proton antiporter 2 (CPA2) transporter (TC 2.A.37) family. KefC subfamily. Homodimer. Interacts with the regulatory subunit KefF.

It localises to the cell inner membrane. Functionally, pore-forming subunit of a potassium efflux system that confers protection against electrophiles. Catalyzes K(+)/H(+) antiport. This Shigella sonnei (strain Ss046) protein is Glutathione-regulated potassium-efflux system protein KefC.